Consider the following 60-residue polypeptide: Large ribosomal subunit protein bL32 (60 aa).

The interval methionine 1 to serine 28 is disordered. A compositionally biased stretch (basic and acidic residues) spans serine 11 to leucine 22.

The protein belongs to the bacterial ribosomal protein bL32 family.

This chain is Large ribosomal subunit protein bL32, found in Pseudomonas savastanoi pv. phaseolicola (strain 1448A / Race 6) (Pseudomonas syringae pv. phaseolicola (strain 1448A / Race 6)).